A 129-amino-acid chain; its full sequence is MSNIPAELKYASSHEWVRKEEDGSYTVGISEHAQELLGDMVFVELPEVGDDVNSGEDCAVAESVKAASDIYAPLSGEVIAVNEALEDSPELVNSDAFGDGWFFRVMPTDLAELDNLLDAEGYQAVIDDE.

In terms of domain architecture, Lipoyl-binding spans 24–106; sequence SYTVGISEHA…FGDGWFFRVM (83 aa). Lys-65 is subject to N6-lipoyllysine.

This sequence belongs to the GcvH family. In terms of assembly, the glycine cleavage system is composed of four proteins: P, T, L and H. The cofactor is (R)-lipoate.

The glycine cleavage system catalyzes the degradation of glycine. The H protein shuttles the methylamine group of glycine from the P protein to the T protein. In Shewanella halifaxensis (strain HAW-EB4), this protein is Glycine cleavage system H protein.